We begin with the raw amino-acid sequence, 178 residues long: Caveolin-1 (178 aa).

Position 2 is an N-acetylserine (Ser-2). At Ser-2 the chain carries Phosphoserine. Residues 2 to 94 (SGGKYVDSEG…WKASFTTFTV (93 aa)) form a required for homooligomerization region. Residues 2–104 (SGGKYVDSEG…TKYWFYRLLS (103 aa)) are Cytoplasmic-facing. The residue at position 5 (Lys-5) is an N6-acetyllysine; alternate. Residue Lys-5 forms a Glycyl lysine isopeptide (Lys-Gly) (interchain with G-Cter in ubiquitin); alternate linkage. A Phosphotyrosine modification is found at Tyr-6. Phosphoserine is present on Ser-9. Tyr-14 is modified (phosphotyrosine; by ABL1). Tyr-25 is subject to Phosphotyrosine. Residues Lys-26, Lys-30, Lys-39, Lys-47, and Lys-57 each participate in a glycyl lysine isopeptide (Lys-Gly) (interchain with G-Cter in ubiquitin) cross-link. Positions 82–94 (DGIWKASFTTFTV) are interaction with CAVIN3. The helical intramembrane region spans 105–125 (ALFGIPMALIWGIYFAILSFL). Over 126-178 (HIWAVVPCIKSFLIEIQCISRVYSIYVHTFCDPLFEAIGKIFSNIRINMQKEI) the chain is Cytoplasmic. Residues 131–142 (VPCIKSFLIEIQ) are interacts with SPRY1, SPRY2, SPRY3 and SPRY4. S-palmitoyl cysteine attachment occurs at residues Cys-133, Cys-143, and Cys-156. The segment at 149 to 160 (SIYVHTFCDPLF) is interacts with SPRY1, SPRY2, and SPRY4. The segment at 167–178 (FSNIRINMQKEI) is interacts with SPRY1, SPRY2, SPRY3 and SPRY4.

This sequence belongs to the caveolin family. Homooligomer. Interacts (via the N-terminus) with DPP4; the interaction is direct. Forms a stable heterooligomeric complex with CAV2 that targets to lipid rafts and drives caveolae formation. Interacts with PACSIN2; this interaction induces membrane tubulation. Interacts with BMX, BTK, CTNNB1, CDH1, GLIPR2, JUP, NOSTRIN, SNAP25 and STX1A. Interacts with SLC7A9. Interacts with TGFBR1. Interacts with CAVIN3 (via leucine-zipper domain) in a cholesterol-sensitive manner. Interacts with CAVIN1. Interacts with EHD2 in a cholesterol-dependent manner. Forms a ternary complex with UBXN6 and VCP; mediates CAV1 targeting to lysosomes for degradation. Interacts with ABCG1; this interaction regulates ABCG1-mediated cholesterol efflux. Interacts with NEU3; this interaction enhances NEU3 sialidase activity within caveola. Interacts (via C-terminus) with SPRY1, SPRY2 (via C-terminus), SPRY3, and SPRY4. In terms of processing, phosphorylated at Tyr-14 by ABL1 in response to oxidative stress. Post-translationally, ubiquitinated. Undergo monoubiquitination and multi- and/or polyubiquitination. Monoubiquitination of N-terminal lysines promotes integration in a ternary complex with UBXN6 and VCP which promotes oligomeric CAV1 targeting to lysosomes for degradation. Ubiquitinated by ZNRF1; leading to degradation and modulation of the TLR4-mediated immune response.

The protein resides in the golgi apparatus membrane. It localises to the cell membrane. Its subcellular location is the membrane. It is found in the caveola. The protein localises to the membrane raft. Its function is as follows. May act as a scaffolding protein within caveolar membranes. Forms a stable heterooligomeric complex with CAV2 that targets to lipid rafts and drives caveolae formation. Mediates the recruitment of CAVIN proteins (CAVIN1/2/3/4) to the caveolae. Interacts directly with G-protein alpha subunits and can functionally regulate their activity. Involved in the costimulatory signal essential for T-cell receptor (TCR)-mediated T-cell activation. Its binding to DPP4 induces T-cell proliferation and NF-kappa-B activation in a T-cell receptor/CD3-dependent manner. Recruits CTNNB1 to caveolar membranes and may regulate CTNNB1-mediated signaling through the Wnt pathway. Negatively regulates TGFB1-mediated activation of SMAD2/3 by mediating the internalization of TGFBR1 from membrane rafts leading to its subsequent degradation. Binds 20(S)-hydroxycholesterol (20(S)-OHC). The protein is Caveolin-1 (CAV1) of Otolemur garnettii (Small-eared galago).